The chain runs to 181 residues: Cytochrome b6-f complex iron-sulfur subunit (181 aa).

Residues 1–35 (MAQTGNFKSPARMSSLGQGAAPASAGAVTGGKPRE) are disordered. 2 helical membrane-spanning segments follow: residues 53-73 (VGGV…RYIV) and 114-134 (GGSL…VHWD). One can recognise a Rieske domain in the interval 85–178 (LAVGPASDVP…VKIEDGKIVV (94 aa)). [2Fe-2S] cluster is bound by residues cysteine 124, histidine 126, cysteine 142, and histidine 145. Residues cysteine 129 and cysteine 144 are joined by a disulfide bond.

This sequence belongs to the Rieske iron-sulfur protein family. The cofactor is [2Fe-2S] cluster.

The protein resides in the cell inner membrane. It catalyses the reaction 2 oxidized [plastocyanin] + a plastoquinol + 2 H(+)(in) = 2 reduced [plastocyanin] + a plastoquinone + 4 H(+)(out). Functionally, component of the green S-bacteria bc-complex which consists of the Rieske protein and cytochrome b subunit and which appears to lack a cytochrome c1-equivalent. This complex has a comparatively low redox potential. This Chlorobaculum tepidum (strain ATCC 49652 / DSM 12025 / NBRC 103806 / TLS) (Chlorobium tepidum) protein is Cytochrome b6-f complex iron-sulfur subunit (petC).